We begin with the raw amino-acid sequence, 252 residues long: Imidazole glycerol phosphate synthase subunit HisF (252 aa).

Active-site residues include Asp-11 and Asp-130.

Belongs to the HisA/HisF family. In terms of assembly, heterodimer of HisH and HisF.

Its subcellular location is the cytoplasm. The enzyme catalyses 5-[(5-phospho-1-deoxy-D-ribulos-1-ylimino)methylamino]-1-(5-phospho-beta-D-ribosyl)imidazole-4-carboxamide + L-glutamine = D-erythro-1-(imidazol-4-yl)glycerol 3-phosphate + 5-amino-1-(5-phospho-beta-D-ribosyl)imidazole-4-carboxamide + L-glutamate + H(+). The protein operates within amino-acid biosynthesis; L-histidine biosynthesis; L-histidine from 5-phospho-alpha-D-ribose 1-diphosphate: step 5/9. IGPS catalyzes the conversion of PRFAR and glutamine to IGP, AICAR and glutamate. The HisF subunit catalyzes the cyclization activity that produces IGP and AICAR from PRFAR using the ammonia provided by the HisH subunit. The chain is Imidazole glycerol phosphate synthase subunit HisF from Hydrogenobaculum sp. (strain Y04AAS1).